Reading from the N-terminus, the 33-residue chain is Photosystem II reaction center protein Psb30 (33 aa).

The chain crosses the membrane as a helical span at residues 5-25; it reads IVAQLTVLALIVVSGPLVIAL.

It belongs to the Psb30/Ycf12 family. In terms of assembly, PSII is composed of 1 copy each of membrane proteins PsbA, PsbB, PsbC, PsbD, PsbE, PsbF, PsbH, PsbI, PsbJ, PsbK, PsbL, PsbM, PsbT, PsbX, PsbY, PsbZ, Psb30/Ycf12, peripheral proteins of the oxygen-evolving complex and a large number of cofactors. It forms dimeric complexes.

The protein localises to the plastid. Its subcellular location is the chloroplast thylakoid membrane. A core subunit of photosystem II (PSII), probably helps stabilize the reaction center. The chain is Photosystem II reaction center protein Psb30 from Angiopteris evecta (Mule's foot fern).